A 179-amino-acid chain; its full sequence is Peptidyl-tRNA hydrolase 2, mitochondrial (179 aa).

A helical membrane pass occupies residues 15–37 (STLGLAVGVACGMCLGWSLRVCF). Glycyl lysine isopeptide (Lys-Gly) (interchain with G-Cter in ubiquitin) cross-links involve residues Lys47, Lys76, Lys81, Lys95, Lys106, Lys115, Lys171, and Lys177.

It belongs to the PTH2 family. In terms of assembly, monomer. Post-translationally, ubiquitinated by PRKN during mitophagy, leading to its degradation and enhancement of mitophagy. Deubiquitinated by USP30.

It is found in the mitochondrion outer membrane. It carries out the reaction an N-acyl-L-alpha-aminoacyl-tRNA + H2O = an N-acyl-L-amino acid + a tRNA + H(+). Functionally, peptidyl-tRNA hydrolase which releases tRNAs from the ribosome during protein synthesis. Promotes caspase-independent apoptosis by regulating the function of two transcriptional regulators, AES and TLE1. The protein is Peptidyl-tRNA hydrolase 2, mitochondrial (PTRH2) of Homo sapiens (Human).